The chain runs to 50 residues: Large ribosomal subunit protein bL33B (50 aa).

Belongs to the bacterial ribosomal protein bL33 family.

The sequence is that of Large ribosomal subunit protein bL33B from Ligilactobacillus salivarius (strain UCC118) (Lactobacillus salivarius).